We begin with the raw amino-acid sequence, 365 residues long: WAT1-related protein At4g01430 (365 aa).

A run of 10 helical transmembrane segments spans residues 7 to 27 (WAPV…NALV), 39 to 59 (IFGA…SYIW), 76 to 96 (FISG…GLSY), 100 to 120 (TVSM…ALIF), 132 to 152 (AGVL…LLTF), 183 to 203 (WLLG…WMLF), 216 to 236 (YSST…LSLY), 250 to 270 (FVIL…TVVT), 280 to 300 (VFVS…DFLI), and 305 to 325 (LYLG…VFLW). In terms of domain architecture, EamA 1 spans 20-151 (MGSVNALVKK…ICIMGAMLLT (132 aa)). The EamA 2 domain maps to 216-324 (YSSTCLMSVF…VTITGLYVFL (109 aa)). The disordered stretch occupies residues 339-365 (LNSSQFSQNKDNEDHTIANHKDTNLPV). The span at 348–365 (KDNEDHTIANHKDTNLPV) shows a compositional bias: basic and acidic residues.

The protein belongs to the drug/metabolite transporter (DMT) superfamily. Plant drug/metabolite exporter (P-DME) (TC 2.A.7.4) family.

The protein localises to the membrane. The protein is WAT1-related protein At4g01430 of Arabidopsis thaliana (Mouse-ear cress).